A 105-amino-acid chain; its full sequence is Cell division protein FtsL (105 aa).

Over 1–22 (MIGNERHGLVGVIGADLIRNAK) the chain is Cytoplasmic. The chain crosses the membrane as a helical span at residues 23-43 (IPLILLVAVLISAVLVVTTAH). The Periplasmic segment spans residues 44–105 (RTRLLTAERE…DPSQENIVIK (62 aa)).

The protein belongs to the FtsL family. As to quaternary structure, part of a complex composed of FtsB, FtsL and FtsQ.

The protein localises to the cell inner membrane. In terms of biological role, essential cell division protein. May link together the upstream cell division proteins, which are predominantly cytoplasmic, with the downstream cell division proteins, which are predominantly periplasmic. The polypeptide is Cell division protein FtsL (Yersinia pestis).